Consider the following 262-residue polypeptide: Abhydrolase domain-containing protein AKT2 (262 aa).

The short motif at 260-262 (SKL) is the Peroxisomal targeting signal type 1 element.

This sequence belongs to the AB hydrolase superfamily. AKT2 hydrolase family.

The protein localises to the peroxisome. Its pathway is mycotoxin biosynthesis. Abhydrolase domain-containing protein; part of the gene clusters that mediate the biosynthesis of the host-selective toxins (HSTs) AK-toxins responsible for Japanese pear black spot disease by the Japanese pear pathotype. AK-toxins are esters of 9,10-epoxy 8-hydroxy 9-methyldecatrienoic acid (EDA). On cellular level, AK-toxins affect plasma membrane of susceptible cells and cause a sudden increase in loss of K(+) after a few minutes of toxin treatment. The acyl-CoA ligase AKT1, the hydrolase AKT2 and enoyl-CoA hydratase AKT3 are all involved in the biosynthesis of the AK-, AF- and ACT-toxin common 9,10-epoxy-8-hydroxy-9-methyl-decatrienoic acid (EDA) structural moiety. Part of the EDA biosynthesis occurs in the peroxisome since these 3 enzymes are localized in peroxisomes. The exact roles of the 3 enzymes, as well as of additional AK-toxin clusters enzymes, including AKT4, AKT6 and AKTS1, have still to be elucidated. The Cytochrome P450 monooxygenase AKT7 on the other side functions to limit production of EDA and AK-toxin, probably via the catalysis of a side reaction of EDA or its precursor. The chain is Abhydrolase domain-containing protein AKT2 from Alternaria alternata (Alternaria rot fungus).